Reading from the N-terminus, the 275-residue chain is 3-methyl-2-oxobutanoate hydroxymethyltransferase (275 aa).

Mg(2+) is bound by residues Asp-44 and Asp-83. 3-methyl-2-oxobutanoate-binding positions include 44 to 45, Asp-83, and Lys-113; that span reads DS. Position 115 (Glu-115) interacts with Mg(2+). Glu-182 functions as the Proton acceptor in the catalytic mechanism.

It belongs to the PanB family. In terms of assembly, homodecamer; pentamer of dimers. It depends on Mg(2+) as a cofactor.

The protein localises to the cytoplasm. The catalysed reaction is 3-methyl-2-oxobutanoate + (6R)-5,10-methylene-5,6,7,8-tetrahydrofolate + H2O = 2-dehydropantoate + (6S)-5,6,7,8-tetrahydrofolate. Its pathway is cofactor biosynthesis; (R)-pantothenate biosynthesis; (R)-pantoate from 3-methyl-2-oxobutanoate: step 1/2. Functionally, catalyzes the reversible reaction in which hydroxymethyl group from 5,10-methylenetetrahydrofolate is transferred onto alpha-ketoisovalerate to form ketopantoate. This chain is 3-methyl-2-oxobutanoate hydroxymethyltransferase, found in Clostridium botulinum (strain Kyoto / Type A2).